The following is a 472-amino-acid chain: uncharacterized protein (472 aa).

Low complexity-rich tracts occupy residues 1–21 (MAFSSSSLRRSLKLGRGSRPG) and 63–74 (ASSLPAPASSSP). The interval 1–74 (MAFSSSSLRR…SLPAPASSSP (74 aa)) is disordered.

This is an uncharacterized protein from Equus caballus (Horse).